Consider the following 195-residue polypeptide: Pyruvoyl-dependent arginine decarboxylase AaxB (195 aa).

At S53 the chain carries Pyruvic acid (Ser).

It belongs to the pyruvoyl-dependent arginine decarboxylase family. Trimer of an alpha-beta dimer. The cofactor is pyruvate.

The protein resides in the cytoplasm. It carries out the reaction L-arginine + H(+) = agmatine + CO2. In terms of biological role, part of the AaxABC system, catalyzes the decarboxylation of L-arginine. The arginine uptake by the bacterium in the macrophage may be a virulence factor against the host innate immune response. This is Pyruvoyl-dependent arginine decarboxylase AaxB (aaxB) from Chlamydia caviae (strain ATCC VR-813 / DSM 19441 / 03DC25 / GPIC) (Chlamydophila caviae).